We begin with the raw amino-acid sequence, 154 residues long: Large ribosomal subunit protein uL13 (154 aa).

The protein belongs to the universal ribosomal protein uL13 family. Part of the 50S ribosomal subunit.

In terms of biological role, this protein is one of the early assembly proteins of the 50S ribosomal subunit, although it is not seen to bind rRNA by itself. It is important during the early stages of 50S assembly. The polypeptide is Large ribosomal subunit protein uL13 (Cereibacter sphaeroides (strain ATCC 17025 / ATH 2.4.3) (Rhodobacter sphaeroides)).